The following is a 130-amino-acid chain: Small ribosomal subunit protein uS11 (130 aa).

It belongs to the universal ribosomal protein uS11 family. In terms of assembly, part of the 30S ribosomal subunit. Interacts with proteins S7 and S18. Binds to IF-3.

In terms of biological role, located on the platform of the 30S subunit, it bridges several disparate RNA helices of the 16S rRNA. Forms part of the Shine-Dalgarno cleft in the 70S ribosome. This chain is Small ribosomal subunit protein uS11, found in Prochlorococcus marinus (strain MIT 9313).